We begin with the raw amino-acid sequence, 475 residues long: Gelsolin-like protein 1 (475 aa).

The actin binding, actin severing, Ca-sensitive stretch occupies residues 1–131 (MGGTSLDPAL…GYRHVDDQFK (131 aa)). Residues 1 to 239 (MGGTSLDPAL…VRKVSKGKDD (239 aa)) are necessary for barbed end capping activity. One copy of the Gelsolin-like 1 repeat lies at 27 to 105 (FVLEPVPEVD…IQNYESPLFL (79 aa)). The actin-actin interfilament contact point stretch occupies residues 70-73 (DEIG). Residues 106 to 147 (SYFPDGIRYVSGGYESGYRHVDDQFKNWKPHLFHCKGKRNVR) form a required for synapse elimination during development region. The tract at residues 133–227 (WKPHLFHCKG…STFWSYFGGV (95 aa)) is required for phosphatidylinositol 4,5-bisphosphate binding and regulation. Gelsolin-like repeat units follow at residues 148 to 208 (CTEV…KVHI), 275 to 341 (RKEQ…STQF), and 375 to 447 (EIAN…PPTF). The tract at residues 240-475 (DDNYWKRLTE…VQNMRRLLFH (236 aa)) is F- and G-actin binding, Ca-independent. An inhibitory for phosphatidylinositol 4,5-bisphosphate binding activity region spans residues 248-348 (TEQITLWKVS…TQFTQWFRDW (101 aa)).

This sequence belongs to the villin/gelsolin family. In terms of assembly, monomer. Binds to actin monomers and filaments. Cleavage by caspase ced-3 activates its actin-severing function and is required for the elimination of presynaptic components during development.

The protein resides in the cytoplasm. The protein localises to the cytoskeleton. Calcium-regulated, actin-modulating protein that binds to the plus (or barbed) ends of actin monomers or filaments, preventing monomer exchange (end-blocking or capping). Binds actin but does not nucleate actin polymerization, albeit slows down elongation by blocking the barbed ends. By promoting actin depolymerization, required for the elimination of presynaptic components downstream of the egl-1, ced-4 and ced-3 apoptotic pathway during larval development. This Caenorhabditis elegans protein is Gelsolin-like protein 1.